The following is a 379-amino-acid chain: Glutamate 5-kinase (379 aa).

An ATP-binding site is contributed by K19. 3 residues coordinate substrate: S59, D146, and N158. ATP contacts are provided by residues 178–179 (TD) and 220–226 (TGGMATK). One can recognise a PUA domain in the interval 285–363 (SGDIIIDDGA…KDIISILGHD (79 aa)).

It belongs to the glutamate 5-kinase family.

The protein localises to the cytoplasm. The enzyme catalyses L-glutamate + ATP = L-glutamyl 5-phosphate + ADP. Its pathway is amino-acid biosynthesis; L-proline biosynthesis; L-glutamate 5-semialdehyde from L-glutamate: step 1/2. Catalyzes the transfer of a phosphate group to glutamate to form L-glutamate 5-phosphate. This chain is Glutamate 5-kinase, found in Vibrio parahaemolyticus serotype O3:K6 (strain RIMD 2210633).